Consider the following 200-residue polypeptide: Holliday junction branch migration complex subunit RuvA (200 aa).

The interval 1-65 (MYEYIKGTLT…ETEHVLYGFS (65 aa)) is domain I. The interval 66 to 144 (SRAERECFRL…TLMPLYLEEP (79 aa)) is domain II. The segment at 145–149 (VVPSS) is flexible linker. A domain III region spans residues 150–200 (TANSSFKEGIGALMNLGFSRLAADRMMTEAVKELSEEASVAELLPIALRKS).

Belongs to the RuvA family. Homotetramer. Forms an RuvA(8)-RuvB(12)-Holliday junction (HJ) complex. HJ DNA is sandwiched between 2 RuvA tetramers; dsDNA enters through RuvA and exits via RuvB. An RuvB hexamer assembles on each DNA strand where it exits the tetramer. Each RuvB hexamer is contacted by two RuvA subunits (via domain III) on 2 adjacent RuvB subunits; this complex drives branch migration. In the full resolvosome a probable DNA-RuvA(4)-RuvB(12)-RuvC(2) complex forms which resolves the HJ.

Its subcellular location is the cytoplasm. The RuvA-RuvB-RuvC complex processes Holliday junction (HJ) DNA during genetic recombination and DNA repair, while the RuvA-RuvB complex plays an important role in the rescue of blocked DNA replication forks via replication fork reversal (RFR). RuvA specifically binds to HJ cruciform DNA, conferring on it an open structure. The RuvB hexamer acts as an ATP-dependent pump, pulling dsDNA into and through the RuvAB complex. HJ branch migration allows RuvC to scan DNA until it finds its consensus sequence, where it cleaves and resolves the cruciform DNA. This Chlamydia trachomatis serovar D (strain ATCC VR-885 / DSM 19411 / UW-3/Cx) protein is Holliday junction branch migration complex subunit RuvA.